Consider the following 360-residue polypeptide: Peptide chain release factor 1 (360 aa).

Glutamine 237 carries the N5-methylglutamine modification.

It belongs to the prokaryotic/mitochondrial release factor family. In terms of processing, methylated by PrmC. Methylation increases the termination efficiency of RF1.

It is found in the cytoplasm. Its function is as follows. Peptide chain release factor 1 directs the termination of translation in response to the peptide chain termination codons UAG and UAA. The protein is Peptide chain release factor 1 of Pseudomonas fluorescens (strain SBW25).